A 151-amino-acid polypeptide reads, in one-letter code: Urease accessory protein UreE (151 aa).

The protein belongs to the UreE family.

It is found in the cytoplasm. In terms of biological role, involved in urease metallocenter assembly. Binds nickel. Probably functions as a nickel donor during metallocenter assembly. This is Urease accessory protein UreE from Bacillus cereus (strain ATCC 10987 / NRS 248).